The sequence spans 45 residues: Photosystem II reaction center protein K (45 aa).

A propeptide spanning residues 1 to 8 (MEAVLLLA) is cleaved from the precursor. Residues 24–44 (MPVIPLFFLALAFVWQAAVGF) traverse the membrane as a helical segment.

Belongs to the PsbK family. As to quaternary structure, PSII is composed of 1 copy each of membrane proteins PsbA, PsbB, PsbC, PsbD, PsbE, PsbF, PsbH, PsbI, PsbJ, PsbK, PsbL, PsbM, PsbT, PsbX, PsbY, PsbZ, Psb30/Ycf12, peripheral proteins PsbO, CyanoQ (PsbQ), PsbU, PsbV and a large number of cofactors. It forms dimeric complexes.

Its subcellular location is the cellular thylakoid membrane. One of the components of the core complex of photosystem II (PSII). PSII is a light-driven water:plastoquinone oxidoreductase that uses light energy to abstract electrons from H(2)O, generating O(2) and a proton gradient subsequently used for ATP formation. It consists of a core antenna complex that captures photons, and an electron transfer chain that converts photonic excitation into a charge separation. The protein is Photosystem II reaction center protein K of Acaryochloris marina (strain MBIC 11017).